The chain runs to 171 residues: Sec-independent protein translocase protein TatB (171 aa).

The helical transmembrane segment at 1–21 (MFDIGFSELLLVFIIGLVVLG) threads the bilayer. The disordered stretch occupies residues 89 to 171 (AESMKRSYVA…APSPSSSDKP (83 aa)). The segment covering 100–123 (DPEKASDEAHTIHNPVVKDNETAH) has biased composition (basic and acidic residues). The segment covering 130 to 139 (AAQTQASSPE) has biased composition (polar residues).

It belongs to the TatB family. As to quaternary structure, the Tat system comprises two distinct complexes: a TatABC complex, containing multiple copies of TatA, TatB and TatC subunits, and a separate TatA complex, containing only TatA subunits. Substrates initially bind to the TatABC complex, which probably triggers association of the separate TatA complex to form the active translocon.

The protein resides in the cell inner membrane. In terms of biological role, part of the twin-arginine translocation (Tat) system that transports large folded proteins containing a characteristic twin-arginine motif in their signal peptide across membranes. Together with TatC, TatB is part of a receptor directly interacting with Tat signal peptides. TatB may form an oligomeric binding site that transiently accommodates folded Tat precursor proteins before their translocation. This Escherichia coli O1:K1 / APEC protein is Sec-independent protein translocase protein TatB.